Reading from the N-terminus, the 445-residue chain is Maltoporin 2 (445 aa).

The signal sequence occupies residues 1–25; sequence MKMKAKWLPIAAAVTAALASQAAFA.

It belongs to the porin LamB (TC 1.B.3) family. Homotrimer formed of three 18-stranded antiparallel beta-barrels, containing three independent channels.

It is found in the cell outer membrane. The catalysed reaction is beta-maltose(in) = beta-maltose(out). In terms of biological role, involved in the transport of maltose and maltodextrins. The polypeptide is Maltoporin 2 (Aeromonas salmonicida (strain A449)).